A 457-amino-acid chain; its full sequence is Phosphomethylpyrimidine synthase (457 aa).

Residues N88, M117, Y146, H182, 204 to 206 (SRG), 245 to 248 (DACR), and E284 each bind substrate. H288 is a Zn(2+) binding site. Y311 is a binding site for substrate. Position 352 (H352) interacts with Zn(2+). The [4Fe-4S] cluster site is built by C428, C431, and C435.

This sequence belongs to the ThiC family. [4Fe-4S] cluster serves as cofactor.

The catalysed reaction is 5-amino-1-(5-phospho-beta-D-ribosyl)imidazole + S-adenosyl-L-methionine = 4-amino-2-methyl-5-(phosphooxymethyl)pyrimidine + CO + 5'-deoxyadenosine + formate + L-methionine + 3 H(+). It participates in cofactor biosynthesis; thiamine diphosphate biosynthesis. Functionally, catalyzes the synthesis of the hydroxymethylpyrimidine phosphate (HMP-P) moiety of thiamine from aminoimidazole ribotide (AIR) in a radical S-adenosyl-L-methionine (SAM)-dependent reaction. The sequence is that of Phosphomethylpyrimidine synthase from Clostridium tetani (strain Massachusetts / E88).